The sequence spans 183 residues: Der GTPase-activating protein YihI (183 aa).

Residues 1-101 (MSRSKKTRKG…KLTDEQKLLK (101 aa)) are disordered. Basic and acidic residues-rich tracts occupy residues 22–46 (KKQD…RHNE) and 92–101 (KLTDEQKLLK).

The protein belongs to the YihI family. As to quaternary structure, interacts with Der.

Functionally, a GTPase-activating protein (GAP) that modifies Der/EngA GTPase function. May play a role in ribosome biogenesis. The protein is Der GTPase-activating protein YihI of Shewanella oneidensis (strain ATCC 700550 / JCM 31522 / CIP 106686 / LMG 19005 / NCIMB 14063 / MR-1).